The sequence spans 240 residues: Uridylate kinase (240 aa).

ATP is bound at residue lysine 12–glycine 15. An involved in allosteric activation by GTP region spans residues glycine 20–glycine 25. Glycine 54 serves as a coordination point for UMP. The ATP site is built by glycine 55 and arginine 59. Residues aspartate 74 and threonine 135 to threonine 142 each bind UMP. ATP is bound by residues tyrosine 168 and aspartate 171.

Belongs to the UMP kinase family. In terms of assembly, homohexamer.

Its subcellular location is the cytoplasm. The enzyme catalyses UMP + ATP = UDP + ADP. The protein operates within pyrimidine metabolism; CTP biosynthesis via de novo pathway; UDP from UMP (UMPK route): step 1/1. Its activity is regulated as follows. Allosterically activated by GTP. Inhibited by UTP. Functionally, catalyzes the reversible phosphorylation of UMP to UDP. The chain is Uridylate kinase from Desulfitobacterium hafniense (strain Y51).